The sequence spans 367 residues: Succinyl-diaminopimelate desuccinylase (367 aa).

Histidine 64 lines the Zn(2+) pocket. The active site involves aspartate 66. Position 95 (aspartate 95) interacts with Zn(2+). Glutamate 125 functions as the Proton acceptor in the catalytic mechanism. Residues glutamate 126, glutamate 154, and histidine 339 each contribute to the Zn(2+) site.

It belongs to the peptidase M20A family. DapE subfamily. Homodimer. Zn(2+) serves as cofactor. It depends on Co(2+) as a cofactor.

The catalysed reaction is N-succinyl-(2S,6S)-2,6-diaminopimelate + H2O = (2S,6S)-2,6-diaminopimelate + succinate. It functions in the pathway amino-acid biosynthesis; L-lysine biosynthesis via DAP pathway; LL-2,6-diaminopimelate from (S)-tetrahydrodipicolinate (succinylase route): step 3/3. Functionally, catalyzes the hydrolysis of N-succinyl-L,L-diaminopimelic acid (SDAP), forming succinate and LL-2,6-diaminopimelate (DAP), an intermediate involved in the bacterial biosynthesis of lysine and meso-diaminopimelic acid, an essential component of bacterial cell walls. In Sulfurovum sp. (strain NBC37-1), this protein is Succinyl-diaminopimelate desuccinylase.